Here is a 7570-residue protein sequence, read N- to C-terminus: Dystonin (7570 aa).

2 Calponin-homology (CH) domains span residues 35–138 and 151–255; these read KVQK…LHFQ and MSAK…DAFP. The actin-binding stretch occupies residues 35-252; sequence KVQKKTFTKW…VITYVSSLYD (218 aa). 4 positions are modified to phosphoserine: leucine 135, lysine 184, serine 236, and serine 237. Spectrin repeat units follow at residues 602 to 699 and 701 to 802; these read EINM…RHLD and LHNF…QHIK. An SH3 domain is found at 887–944; sequence KTSIPIKAICDYRQIEITIYKDDECVLANNSHRAKWKVISPTGNEAMVPSVCFTVPPP. Spectrin repeat units follow at residues 1293 to 1422 and 1440 to 1540; these read KYYR…KFAG and KEHV…QESQ. The residue at position 1382 (serine 1382) is a Phosphoserine. The short motif at 1383 to 1389 is the Nuclear localization signal; in isoform 6 element; sequence PVKRRRM. Glutamate 1565 is subject to Phosphoserine. Plectin repeat units lie at residues 1584–1626, 1660–1703, 1774–1817, 1818–1855, and 1856–1891; these read IRLL…QLKE, KVLE…LERQ, RLLS…LTYQ, VQTGGIIQSNPAKRLTVDEAVQCDLITSSSALLVLEAQ, and RGYVGLIWPHSGEIFPTSSSLQQELITNELAYKILN. Serine 2229 bears the Phosphoserine mark. 3 disordered regions span residues 2317–2346, 2383–2441, and 2585–2616; these read SNTSGEDEKTHPGFQQMPEDKEDESEIEEY, LLND…DETA, and DYIYDSNDQDDDDDDGIDEEGGGIRDENGKPR. Residues 2336 to 2345 show a composition bias toward acidic residues; the sequence is DKEDESEIEE. A compositionally biased stretch (low complexity) spans 2385–2394; the sequence is NDQQNNTGTD. 3 stretches are compositionally biased toward acidic residues: residues 2395–2412, 2430–2439, and 2591–2605; these read TDSDDDFYDTPLFEDDDH, YDTLQEENDE, and NDQDDDDDDGIDEEG. Position 2919 is a phosphoserine (serine 2919). Residues 3190-3221 form a disordered region; that stretch reads EASTVPSDSQMSDSSGVSPMTNSSELKPESRD. The span at 3192-3209 shows a compositional bias: low complexity; that stretch reads STVPSDSQMSDSSGVSPM. 28 Spectrin repeats span residues 3395-3501, 3643-3752, 3926-4040, 4047-4153, 4160-4259, 4269-4368, 4516-4621, 4628-4732, 4742-4842, 4849-4951, 4958-5058, 5068-5167, 5174-5277, 5284-5388, 5395-5497, 5504-5715, 5831-5933, 5941-6041, 6048-6154, 6161-6263, 6270-6373, 6380-6482, 6489-6591, 6598-6700, 6707-6810, 6817-6918, 6925-7027, and 7037-7167; these read LQHT…KQIM, QEYK…KELD, EKFD…NNLK, QHYE…EKLQ, LSVQ…ETLA, ELFE…EAVT, QKAQ…QKLE, TQFQ…DWID, QSLL…QHLQ, HQFQ…NKLK, LKYK…FCLE, QEVS…SFLE, GHFQ…EQVE, EEFY…AQLQ, GRFQ…RQLE, QQFH…KTLE, QQFD…LQLE, QFWE…VALD, TQFH…AKLL, EKFW…DKLE, VQYQ…HKLE, GQFQ…QQLD, KGFH…TKLE, MEFH…RSLD, KQFH…NKLE, GQFT…TRLE, EEFH…QRLA, and QELL…RKLN. Serine 3968 carries the phosphoserine modification. The residue at position 4749 (serine 4749) is a Phosphoserine. Residue lysine 5470 forms a Glycyl lysine isopeptide (Lys-Gly) (interchain with G-Cter in ubiquitin) linkage. EF-hand domains lie at 7197–7232 and 7233–7268; these read HKKSRVMDFFRRIDKDQDGKITRQEFIDGILSSKFP and TSRLEMSAVADIFDRDGDGYIDYYEFVAALHPNKDA. Positions 7210, 7212, 7214, 7216, 7221, 7246, 7248, 7250, 7252, and 7257 each coordinate Ca(2+). One can recognise a GAR domain in the interval 7273-7351; it reads TDADKIEDEV…EFLVKNDPCR (79 aa). Disordered stretches follow at residues 7358–7379, 7395–7452, and 7481–7570; these read KMLRSESNSSITTTQPTIAKGR, SQGM…SKLR, and QFAD…SSKR. Over residues 7362–7374 the composition is skewed to polar residues; that stretch reads SESNSSITTTQPT. Composition is skewed to low complexity over residues 7411–7441 and 7490–7504; these read SSRGASPNRSTSVSSQAAQAASPQVPATTTP and SRPGSRAGSKAGSRA. The residue at position 7432 (serine 7432) is a Phosphoserine. Serine 7510, serine 7513, and serine 7525 each carry phosphoserine. The segment covering 7519-7535 has biased composition (polar residues); it reads EIQSVCSDVETVPQTHR. The Microtubule tip localization signal motif lies at 7550–7553; it reads SKIP.

As to quaternary structure, homodimer. Isoform 1 interacts (via N-terminus) with PLEC (via N-terminus). Interacts with the neuronal intermediate filament protein, PRPH. Interacts with DES. Interacts with SYNE3. Isoform 1 and isoform 6 can homodimerize (via N-terminus). Isoform 1 interacts (via N-terminus) with ACTN2. Isoform 1 interacts (via N-terminus) with PLEC (via N-terminus). Isoform 3 interacts (via N-terminus) with COL17A1 (via cytoplasmic region). Isoform 3 interacts (via N-terminus) with ITGB4 isoform beta-4a (via cytoplasmic region). Isoform 3 interacts (via N-terminus) with ERBIN (via C-terminus). Isoform 3 associates (via C-terminal) with KRT5-KRT14 (via rod region) intermediate filaments of keratins. Interacts with MAPRE1; probably required for targeting to the growing microtubule plus ends. Interacts with TMIGD2. Isoform 9 interacts with TMEM108. Isoform 1 is expressed in myoblasts (at protein level). Isoform 3 is expressed in the skin. Isoform 6 is expressed in the brain. Highly expressed in skeletal muscle and cultured keratinocytes.

It localises to the cytoplasm. Its subcellular location is the cytoskeleton. The protein resides in the stress fiber. It is found in the cell projection. The protein localises to the axon. It localises to the myofibril. Its subcellular location is the sarcomere. The protein resides in the z line. It is found in the h zone. The protein localises to the cell junction. It localises to the hemidesmosome. Its subcellular location is the nucleus. The protein resides in the nucleus envelope. It is found in the membrane. The protein localises to the endoplasmic reticulum membrane. It localises to the cell cortex. Its subcellular location is the cell membrane. Its function is as follows. Cytoskeletal linker protein. Acts as an integrator of intermediate filaments, actin and microtubule cytoskeleton networks. Required for anchoring either intermediate filaments to the actin cytoskeleton in neural and muscle cells or keratin-containing intermediate filaments to hemidesmosomes in epithelial cells. The proteins may self-aggregate to form filaments or a two-dimensional mesh. Regulates the organization and stability of the microtubule network of sensory neurons to allow axonal transport. Mediates docking of the dynein/dynactin motor complex to vesicle cargos for retrograde axonal transport through its interaction with TMEM108 and DCTN1. Functionally, plays a structural role in the assembly of hemidesmosomes of epithelial cells; anchors keratin-containing intermediate filaments to the inner plaque of hemidesmosomes. Required for the regulation of keratinocyte polarity and motility; mediates integrin ITGB4 regulation of RAC1 activity. In terms of biological role, required for bundling actin filaments around the nucleus. Regulates the organization and stability of the microtubule network of sensory neurons to allow axonal transport. This is Dystonin from Homo sapiens (Human).